The following is a 116-amino-acid chain: Fluoride-specific ion channel FluC 1 (116 aa).

4 consecutive transmembrane segments (helical) span residues 1–21 (MYAPLFVAIGGFFGAMARYLV), 32–52 (FPLGTLIVNLLGSFLLGWLAG), 54–74 (GAADAAKLLVGTGFMGAFTTF), and 93–113 (VVVYLAATYLCGVWLAWLGYH). Na(+)-binding residues include Gly-69 and Thr-72.

It belongs to the fluoride channel Fluc/FEX (TC 1.A.43) family.

The protein localises to the cell membrane. The enzyme catalyses fluoride(in) = fluoride(out). With respect to regulation, na(+) is not transported, but it plays an essential structural role and its presence is essential for fluoride channel function. Functionally, fluoride-specific ion channel. Important for reducing fluoride concentration in the cell, thus reducing its toxicity. This is Fluoride-specific ion channel FluC 1 from Geobacillus kaustophilus (strain HTA426).